The chain runs to 544 residues: Methionine--tRNA ligase 2 (544 aa).

The 'HIGH' region motif lies at 10–20 (PYANGSLHLGH). Residues C141, C144, C153, and C156 each contribute to the Zn(2+) site. A 'KMSKS' region motif is present at residues 329–333 (KLSTS). ATP is bound at residue T332.

The protein belongs to the class-I aminoacyl-tRNA synthetase family. MetG type 1 subfamily. As to quaternary structure, monomer. Requires Zn(2+) as cofactor.

It is found in the cytoplasm. It carries out the reaction tRNA(Met) + L-methionine + ATP = L-methionyl-tRNA(Met) + AMP + diphosphate. In terms of biological role, is required not only for elongation of protein synthesis but also for the initiation of all mRNA translation through initiator tRNA(fMet) aminoacylation. The protein is Methionine--tRNA ligase 2 of Bacillus cereus (strain ATCC 14579 / DSM 31 / CCUG 7414 / JCM 2152 / NBRC 15305 / NCIMB 9373 / NCTC 2599 / NRRL B-3711).